Reading from the N-terminus, the 176-residue chain is uncharacterized protein (176 aa).

Residues 15 to 28 (TSSNPPASASQSTG) are compositionally biased toward polar residues. Disordered regions lie at residues 15–100 (TSSN…TSAG) and 125–176 (ASLR…NLGA). Basic and acidic residues predominate over residues 43–52 (FIDKVTDKPS).

This is an uncharacterized protein from Homo sapiens (Human).